The chain runs to 134 residues: Interleukin-5 (134 aa).

Residues 1–21 form the signal peptide; sequence MRMLLNLSLLALGAAYVSAFA. N-linked (GlcNAc...) asparagine glycosylation is found at asparagine 76 and asparagine 90.

The protein belongs to the IL-5 family. In terms of assembly, homodimer; disulfide-linked. Interacts with IL5RA. Interacts with CSF2RB.

Its subcellular location is the secreted. In terms of biological role, homodimeric cytokine expressed predominantly by T-lymphocytes and NK cells that plays an important role in the survival, differentiation, and chemotaxis of eosinophils. Also acts on activated and resting B-cells to induce immunoglobulin production, growth, and differentiation. Mechanistically, exerts its biological effects through a receptor composed of IL5RA subunit and the cytokine receptor common subunit beta/CSF2RB. Binding to the receptor leads to activation of various kinases including LYN, SYK and JAK2 and thereby propagates signals through the RAS-MAPK and JAK-STAT5 pathways respectively. The sequence is that of Interleukin-5 (IL5) from Canis lupus familiaris (Dog).